A 79-amino-acid polypeptide reads, in one-letter code: Raniseptin-3 (79 aa).

The signal sequence occupies residues 1–22 (MAFLKKSLFLVLFLGIVSLSIC). Residues 23–49 (EEEKREGEEEEKQEEENEELSEEELRE) constitute a propeptide that is removed on maturation.

This sequence belongs to the frog skin active peptide (FSAP) family. Dermaseptin subfamily. As to expression, expressed by the skin glands.

It is found in the secreted. Functionally, has antibacterial activity. The chain is Raniseptin-3 from Boana raniceps (Chaco tree frog).